Consider the following 270-residue polypeptide: Sec-independent protein translocase protein TatC (270 aa).

The next 6 membrane-spanning stretches (helical) occupy residues 25-45 (FIAV…LFDI), 75-95 (VSLL…FWMF), 111-131 (VVIL…FIVF), 156-176 (LGFA…PLVL), 195-211 (KYAI…ITPP), and 213-233 (VVTQ…SIIG). Positions 243–270 (SDEEEAAENSDVQTDKSTDDTTPGEDQN) are disordered.

This sequence belongs to the TatC family. The Tat system comprises two distinct complexes: a TatABC complex, containing multiple copies of TatA, TatB and TatC subunits, and a separate TatA complex, containing only TatA subunits. Substrates initially bind to the TatABC complex, which probably triggers association of the separate TatA complex to form the active translocon.

The protein localises to the cell inner membrane. Functionally, part of the twin-arginine translocation (Tat) system that transports large folded proteins containing a characteristic twin-arginine motif in their signal peptide across membranes. Together with TatB, TatC is part of a receptor directly interacting with Tat signal peptides. The chain is Sec-independent protein translocase protein TatC from Desulforapulum autotrophicum (strain ATCC 43914 / DSM 3382 / VKM B-1955 / HRM2) (Desulfobacterium autotrophicum).